We begin with the raw amino-acid sequence, 187 residues long: F-box protein At5g41720 (187 aa).

The 48-residue stretch at 2–49 (MMNSPLDYDVLLEIMSYCPATEMAKFRLLSKECNKRSYEMSFINRHLH) folds into the F-box domain.

The protein is F-box protein At5g41720 of Arabidopsis thaliana (Mouse-ear cress).